Consider the following 1529-residue polypeptide: ABC multidrug transporter AFR2 (1529 aa).

The segment covering 1–10 (MAFAGVGQGL) has biased composition (gly residues). The interval 1–21 (MAFAGVGQGLGTYDRTEQTSG) is disordered. The ABC transporter 1 domain occupies 144 to 394 (GALRDLISNR…FVDMGFHCPS (251 aa)). Asn-235 and Asn-318 each carry an N-linked (GlcNAc...) asparagine glycan. Helical transmembrane passes span 505–525 (LTLT…SVFY), 539–559 (ALLF…ILIL), 589–609 (IPYK…MTNL), 614–634 (GPYF…SMLF), and 648–668 (LAPA…AVNV). N-linked (GlcNAc...) asparagine glycosylation occurs at Asn-742. A helical transmembrane segment spans residues 757 to 777 (GILIGFFLFFTAIYMTATEFI). Residues 845-1087 (FSWKDVVYDI…ILIDYFEKNG (243 aa)) enclose the ABC transporter 2 domain. ATP is bound at residue 881–888 (GVSGAGKT). The next 5 helical transmembrane spans lie at 1193–1213 (YIWS…FSFF), 1227–1247 (FSVF…MPNF), 1268–1288 (IFIL…GAVI), 1314–1334 (LMFL…IMIV), and 1353–1373 (MCLI…FWMF). N-linked (GlcNAc...) asparagine glycosylation is present at Asn-1434. The helical transmembrane segment at 1465–1485 (FGLLWAYVVFNIIAAVGIYWL) threads the bilayer. The segment at 1493-1529 (GKEQASEPEGVQEKLVPAQSSEKKRESVSRGSESTAA) is disordered.

Belongs to the ABC transporter superfamily. ABCG family. PDR (TC 3.A.1.205) subfamily.

It is found in the cell membrane. It catalyses the reaction itraconazole(in) + ATP + H2O = itraconazole(out) + ADP + phosphate + H(+). The catalysed reaction is voriconazole(in) + ATP + H2O = voriconazole(out) + ADP + phosphate + H(+). The enzyme catalyses fluconazole(in) + ATP + H2O = fluconazole(out) + ADP + phosphate + H(+). In terms of biological role, pleiotropic ABC efflux transporter that confers resistance to structurally and functionally unrelated compounds including azoles such as fluconazole (FLC), itraconazole (ITC), posaconazole (POS), and voriconazole (VRC). This is ABC multidrug transporter AFR2 from Cryptococcus neoformans var. grubii serotype A (strain H99 / ATCC 208821 / CBS 10515 / FGSC 9487) (Filobasidiella neoformans var. grubii).